The sequence spans 261 residues: Cytochrome c oxidase subunit 3 (261 aa).

Residues 1 to 15 are Mitochondrial matrix-facing; the sequence is MTHQTHAYHMVNPSP. Residues 16-34 form a helical membrane-spanning segment; it reads WPLTGALSALLMTSGLIMW. Over 35–40 the chain is Mitochondrial intermembrane; that stretch reads FHFNST. A helical transmembrane segment spans residues 41–66; sequence TLLMLGLTTNMLTMYQWWRDVIREST. Residues 67–72 lie on the Mitochondrial matrix side of the membrane; it reads FQGHHT. The helical transmembrane segment at 73 to 105 threads the bilayer; that stretch reads PNVQKGLRYGMILFIISEVLFFTGFFWAFYHSS. Residues 106-128 lie on the Mitochondrial intermembrane side of the membrane; it reads LAPTPELGGCWPPTGIHPLNPLE. A helical transmembrane segment spans residues 129-152; the sequence is VPLLNTSVLLASGVSITWAHHSLM. Topologically, residues 153-155 are mitochondrial matrix; it reads EGN. Residues 156 to 183 form a helical membrane-spanning segment; it reads RNHMLQALFITIALGVYFTLLQASEYYE. The Mitochondrial intermembrane portion of the chain corresponds to 184–190; it reads APFTISD. A helical membrane pass occupies residues 191 to 223; sequence GVYGSTFFVATGFHGLHVIIGSTFLIVCFFRQL. The Mitochondrial matrix portion of the chain corresponds to 224–232; sequence KFHFTSNHH. A helical membrane pass occupies residues 233 to 256; the sequence is FGFEAAAWYWHFVDVVWLFLYVSI. Residues 257–261 lie on the Mitochondrial intermembrane side of the membrane; the sequence is YWWGS.

It belongs to the cytochrome c oxidase subunit 3 family. In terms of assembly, component of the cytochrome c oxidase (complex IV, CIV), a multisubunit enzyme composed of 14 subunits. The complex is composed of a catalytic core of 3 subunits MT-CO1, MT-CO2 and MT-CO3, encoded in the mitochondrial DNA, and 11 supernumerary subunits COX4I, COX5A, COX5B, COX6A, COX6B, COX6C, COX7A, COX7B, COX7C, COX8 and NDUFA4, which are encoded in the nuclear genome. The complex exists as a monomer or a dimer and forms supercomplexes (SCs) in the inner mitochondrial membrane with NADH-ubiquinone oxidoreductase (complex I, CI) and ubiquinol-cytochrome c oxidoreductase (cytochrome b-c1 complex, complex III, CIII), resulting in different assemblies (supercomplex SCI(1)III(2)IV(1) and megacomplex MCI(2)III(2)IV(2)).

It localises to the mitochondrion inner membrane. The enzyme catalyses 4 Fe(II)-[cytochrome c] + O2 + 8 H(+)(in) = 4 Fe(III)-[cytochrome c] + 2 H2O + 4 H(+)(out). Functionally, component of the cytochrome c oxidase, the last enzyme in the mitochondrial electron transport chain which drives oxidative phosphorylation. The respiratory chain contains 3 multisubunit complexes succinate dehydrogenase (complex II, CII), ubiquinol-cytochrome c oxidoreductase (cytochrome b-c1 complex, complex III, CIII) and cytochrome c oxidase (complex IV, CIV), that cooperate to transfer electrons derived from NADH and succinate to molecular oxygen, creating an electrochemical gradient over the inner membrane that drives transmembrane transport and the ATP synthase. Cytochrome c oxidase is the component of the respiratory chain that catalyzes the reduction of oxygen to water. Electrons originating from reduced cytochrome c in the intermembrane space (IMS) are transferred via the dinuclear copper A center (CU(A)) of subunit 2 and heme A of subunit 1 to the active site in subunit 1, a binuclear center (BNC) formed by heme A3 and copper B (CU(B)). The BNC reduces molecular oxygen to 2 water molecules using 4 electrons from cytochrome c in the IMS and 4 protons from the mitochondrial matrix. The sequence is that of Cytochrome c oxidase subunit 3 (MT-CO3) from Antilope cervicapra (Blackbuck).